The following is a 211-amino-acid chain: Histidine biosynthesis bifunctional protein HisIE (211 aa).

The phosphoribosyl-AMP cyclohydrolase stretch occupies residues 1–117 (MSTQTNTKSD…CWLDGNAHPF (117 aa)). The segment at 118-211 (LNNLAELIAS…LARHQKAQRK (94 aa)) is phosphoribosyl-ATP pyrophosphohydrolase.

In the N-terminal section; belongs to the PRA-CH family. It in the C-terminal section; belongs to the PRA-PH family.

The protein resides in the cytoplasm. The catalysed reaction is 1-(5-phospho-beta-D-ribosyl)-ATP + H2O = 1-(5-phospho-beta-D-ribosyl)-5'-AMP + diphosphate + H(+). It catalyses the reaction 1-(5-phospho-beta-D-ribosyl)-5'-AMP + H2O = 1-(5-phospho-beta-D-ribosyl)-5-[(5-phospho-beta-D-ribosylamino)methylideneamino]imidazole-4-carboxamide. It functions in the pathway amino-acid biosynthesis; L-histidine biosynthesis; L-histidine from 5-phospho-alpha-D-ribose 1-diphosphate: step 2/9. The protein operates within amino-acid biosynthesis; L-histidine biosynthesis; L-histidine from 5-phospho-alpha-D-ribose 1-diphosphate: step 3/9. The polypeptide is Histidine biosynthesis bifunctional protein HisIE (Shewanella oneidensis (strain ATCC 700550 / JCM 31522 / CIP 106686 / LMG 19005 / NCIMB 14063 / MR-1)).